A 232-amino-acid chain; its full sequence is Large ribosomal subunit protein uL1 (232 aa).

It belongs to the universal ribosomal protein uL1 family. In terms of assembly, part of the 50S ribosomal subunit.

In terms of biological role, binds directly to 23S rRNA. The L1 stalk is quite mobile in the ribosome, and is involved in E site tRNA release. Protein L1 is also a translational repressor protein, it controls the translation of the L11 operon by binding to its mRNA. The protein is Large ribosomal subunit protein uL1 of Xanthomonas axonopodis pv. citri (strain 306).